We begin with the raw amino-acid sequence, 193 residues long: Probable GTP-binding protein EngB (193 aa).

The EngB-type G domain maps to 19–188 (SVKEVCFMGR…HKQIFELFKA (170 aa)). Residues 27-34 (GRSNVGKS), 53-57 (GRTQL), 70-73 (DLPG), 136-139 (NKFD), and 167-169 (VSA) contribute to the GTP site. Mg(2+)-binding residues include Ser34 and Thr55.

It belongs to the TRAFAC class TrmE-Era-EngA-EngB-Septin-like GTPase superfamily. EngB GTPase family. Mg(2+) serves as cofactor.

Necessary for normal cell division and for the maintenance of normal septation. The sequence is that of Probable GTP-binding protein EngB from Mycoplasma pneumoniae (strain ATCC 29342 / M129 / Subtype 1) (Mycoplasmoides pneumoniae).